The primary structure comprises 448 residues: tRNA modification GTPase MnmE (448 aa).

The (6S)-5-formyl-5,6,7,8-tetrahydrofolate site is built by Arg-25, Glu-82, and Lys-121. A TrmE-type G domain is found at Gly-217–Gly-372. K(+) is bound at residue Asn-227. GTP is bound by residues Asn-227–Ser-232, Thr-246–Thr-252, Asp-271–Gly-274, and Ser-353–Arg-355. Residue Ser-231 participates in Mg(2+) binding. The K(+) site is built by Thr-246, Ile-248, and Thr-251. Thr-252 provides a ligand contact to Mg(2+). Lys-448 is a (6S)-5-formyl-5,6,7,8-tetrahydrofolate binding site.

The protein belongs to the TRAFAC class TrmE-Era-EngA-EngB-Septin-like GTPase superfamily. TrmE GTPase family. In terms of assembly, homodimer. Heterotetramer of two MnmE and two MnmG subunits. Requires K(+) as cofactor.

It localises to the cytoplasm. Exhibits a very high intrinsic GTPase hydrolysis rate. Involved in the addition of a carboxymethylaminomethyl (cmnm) group at the wobble position (U34) of certain tRNAs, forming tRNA-cmnm(5)s(2)U34. The chain is tRNA modification GTPase MnmE from Methylococcus capsulatus (strain ATCC 33009 / NCIMB 11132 / Bath).